A 151-amino-acid polypeptide reads, in one-letter code: Salivary C-type lectin 2 (151 aa).

Positions 1-15 (MKLLLSFALLGLVAC) are cleaved as a signal peptide. The C-type lectin domain occupies 25-147 (YCFPNEVATW…CTSKRRFVCE (123 aa)). 2 disulfide bridges follow: cysteine 41–cysteine 146 and cysteine 118–cysteine 138.

It depends on Ca(2+) as a cofactor. In terms of tissue distribution, expressed in female salivary gland. Not detected or low-level expression in female midgut and fat body.

It localises to the secreted. Salivary protein with carbohydrate-binding activity. Binds to D-mannose, D-galactose, D-glucose and maltose. Agglutinates host erythrocytes. Probably participates in mosquito innate immune responses to prevent microorganism multiplication in sugar and blood meals. Its function is as follows. (Microbial infection) Binds to the surface of and agglutinates Escherichia coli in vitro. Functionally, (Microbial infection) Binds to the surface of and agglutinates Pseudomonas aeruginosa in vitro. In terms of biological role, (Microbial infection) Binds to the surface of and agglutinates Bacillus subtilis in vitro. (Microbial infection) Agglutinates Staphylococcus aureus in vitro. Its function is as follows. (Microbial infection) Agglutinates Candida albicans in vitro. Functionally, (Microbial infection) Does not affect replication of dengue virus type 2 in host cells. This Aedes albopictus (Asian tiger mosquito) protein is Salivary C-type lectin 2.